The following is a 334-amino-acid chain: Phosphate acyltransferase (334 aa).

It belongs to the PlsX family. In terms of assembly, homodimer. Probably interacts with PlsY.

It localises to the cytoplasm. It carries out the reaction a fatty acyl-[ACP] + phosphate = an acyl phosphate + holo-[ACP]. It participates in lipid metabolism; phospholipid metabolism. Its function is as follows. Catalyzes the reversible formation of acyl-phosphate (acyl-PO(4)) from acyl-[acyl-carrier-protein] (acyl-ACP). This enzyme utilizes acyl-ACP as fatty acyl donor, but not acyl-CoA. This chain is Phosphate acyltransferase, found in Mycoplasmopsis agalactiae (strain NCTC 10123 / CIP 59.7 / PG2) (Mycoplasma agalactiae).